The sequence spans 426 residues: Chaperone SurA (426 aa).

The first 13 residues, 1-13, serve as a signal peptide directing secretion; it reads MLGALFLGTAANA. 2 consecutive PpiC domains span residues 164–265 and 274–373; these read SEEL…KLLE and RDEV…EVLG.

It is found in the periplasm. The enzyme catalyses [protein]-peptidylproline (omega=180) = [protein]-peptidylproline (omega=0). Chaperone involved in the correct folding and assembly of outer membrane proteins. Recognizes specific patterns of aromatic residues and the orientation of their side chains, which are found more frequently in integral outer membrane proteins. May act in both early periplasmic and late outer membrane-associated steps of protein maturation. The protein is Chaperone SurA of Pseudomonas fluorescens (strain Pf0-1).